Reading from the N-terminus, the 497-residue chain is Protein root UVB sensitive 6 (497 aa).

The protein belongs to the RUS1 family.

In terms of biological role, required for normal embryo development. This is Protein root UVB sensitive 6 from Arabidopsis thaliana (Mouse-ear cress).